The primary structure comprises 102 residues: Heat shock protein HspQ (102 aa).

Belongs to the HspQ family.

Its subcellular location is the cytoplasm. Involved in the degradation of certain denaturated proteins, including DnaA, during heat shock stress. The sequence is that of Heat shock protein HspQ from Pectobacterium atrosepticum (strain SCRI 1043 / ATCC BAA-672) (Erwinia carotovora subsp. atroseptica).